The sequence spans 496 residues: Mothers against decapentaplegic homolog 6 (496 aa).

A compositionally biased stretch (basic residues) spans 1 to 15 (MFRSKRSGLVRRLWR). 2 disordered regions span residues 1-116 (MFRS…PGWL) and 136-156 (GAPRDASDPLAGAALEPAGGG). Dimethylated arginine; alternate is present on residues Arg-75 and Arg-82. An omega-N-methylarginine; alternate mark is found at Arg-75 and Arg-82. Residues 148–275 (AALEPAGGGR…FSRLCGPESP (128 aa)) form the MH1 domain. Residue Lys-173 forms a Glycyl lysine isopeptide (Lys-Gly) (interchain with G-Cter in ubiquitin) linkage. Residues Cys-205, Cys-247, Cys-260, and His-265 each contribute to the Zn(2+) site. The 166-residue stretch at 331–496 (WCSVAYWEHR…WLEILLNNPR (166 aa)) folds into the MH2 domain. Ser-435 is subject to Phosphoserine; by PRKX; in vitro.

It belongs to the dwarfin/SMAD family. Interacts with NEDD4L. Interacts with WWP1. Interacts with STAMBP and PRKX. Interacts with RNF111 and AXIN1. Interacts with TGF-beta type I receptor superfamily members, including ACVR1B, BMPR1B and TGFBR1. In response to BMP2, but not to TGFB treatment, interacts with SMAD1, but not with SMAD2, nor with SMAD4; this interaction may inhibit SMAD1 binding to SMAD4. Interacts with HOXC8 and HOXC9. Interacts with PELI1; this interaction interferes with PELI1 complex formation with TRAF6, IRAK1, IRAK4 and MYD88 in response to IL1B and hence negatively regulates IL1R-TLR signaling. Interacts with TSC22D1/TSC-22. Post-translationally, phosphorylated by BMP type 1 receptor kinase and by PRKX. In terms of processing, monoubiquitinated at Lys-173 by the E2/E3 hybrid ubiquitin-protein ligase UBE2O, leading to reduced binding affinity for the activated BMP type I receptor ACVR1/ALK2, thereby enhancing BMP7 and regulating adipocyte differentiation. Ubiquitinated by WWP1. Ubiquitinated by ARK2C, promoting proteasomal degradation, leading to enhance the BMP-Smad signaling. Arginine methylation by PRMT1, which is recruited by BMPR2, initiates BMP-Induced signaling and induces dissociation from the BMPR1B receptor at the cell surface leading to derepress downstream Smad1/Smad5 signaling. Expressed in the brain, heart, ovary, peripheral blood leukocytes, small intestine, spleen, thymus, bone marrow, fetal liver and lymph nodes.

The protein resides in the nucleus. Functionally, transforming growth factor-beta superfamily receptors signaling occurs through the Smad family of intracellular mediators. SMAD6 is an inhibitory Smad (i-Smad) that negatively regulates signaling downstream of type I transforming growth factor-beta. Acts as a mediator of TGF-beta and BMP anti-inflammatory activities. Suppresses IL1R-TLR signaling through its direct interaction with PEL1, preventing NF-kappa-B activation, nuclear transport and NF-kappa-B-mediated expression of pro-inflammatory genes. Blocks the BMP-SMAD1 signaling pathway by competing with SMAD4 for receptor-activated SMAD1-binding. Binds to regulatory elements in target promoter regions. The sequence is that of Mothers against decapentaplegic homolog 6 (SMAD6) from Homo sapiens (Human).